Reading from the N-terminus, the 149-residue chain is Protein OPG200 (149 aa).

This sequence belongs to the orthopoxvirus OPG200 family. Homodimers. Interacts with host IKBKB; this interaction inhibits host NF-kappa-B activation.

Contributes to virulence by binding to the host IKBKB subunit of the IKK complex and preventing host NF-kappa-B activation in response to pro-inflammatory stimuli such as TNF-alpha or IL1B. Mechanistically, sterically hinders the direct contact between the kinase domains of IKBKB in the IKK complex containing IKBKB, CHUK/IKKA and NEMO. The polypeptide is Protein OPG200 (OPG200) (Vaccinia virus (strain Western Reserve) (VACV)).